The chain runs to 1927 residues: Integrin beta-like protein A (1927 aa).

A signal peptide spans 1–20; it reads MNRILTLFILFISLFIVCEA. Topologically, residues 21-1860 are extracellular; sequence THFRFGTMSW…KENNNKTVLT (1840 aa). Residue N309 is glycosylated (N-linked (GlcNAc...) asparagine). An EGF-like domain is found at 425–462; that stretch reads YGEKCDPVDPCVNGESNEGSQGNGKCTCYYGWEGKNCD. 2 disulfides stabilise this stretch: C435–C450 and C452–C461. Residues 522–709 form the VWFA domain; that stretch reads EVLVLVDSQP…VLSKAVVKAI (188 aa). 5 N-linked (GlcNAc...) asparagine glycosylation sites follow: N1122, N1516, N1717, N1723, and N1855. A helical membrane pass occupies residues 1861-1881; sequence GAIAGAAAGAGLLAAGAWFLL. At 1882-1927 the chain is on the cytoplasmic side; the sequence is KKSAPPTDAFFGEGAFADGAVSTNPMYEESGRSAINPLYEASSENL.

The protein belongs to the SIB family. As to quaternary structure, interacts with talA/talin.

It is found in the membrane. Its function is as follows. Implicated in cellular adhesion to substrate or phagocytic particles. In Dictyostelium discoideum (Social amoeba), this protein is Integrin beta-like protein A (sibA).